We begin with the raw amino-acid sequence, 277 residues long: Ubiquinone biosynthesis protein COQ4, mitochondrial (277 aa).

The transit peptide at 1–14 directs the protein to the mitochondrion; that stretch reads MLTKRALRTTDPYR. Positions 157, 158, 161, and 173 each coordinate Zn(2+).

This sequence belongs to the COQ4 family. As to quaternary structure, component of a multi-subunit COQ enzyme complex, composed of at least COQ3, COQ4, COQ5, COQ6, COQ7 and COQ9. It depends on Zn(2+) as a cofactor.

It is found in the mitochondrion inner membrane. The catalysed reaction is a 4-hydroxy-3-methoxy-5-(all-trans-polyprenyl)benzoate + H(+) = a 2-methoxy-6-(all-trans-polyprenyl)phenol + CO2. It functions in the pathway cofactor biosynthesis; ubiquinone biosynthesis. Its function is as follows. Lyase that catalyzes the C1-decarboxylation of 4-hydroxy-3-methoxy-5-(all-trans-polyprenyl)benzoic acid into 2-methoxy-6-(all-trans-polyprenyl)phenol during ubiquinone biosynthesis. In Ajellomyces capsulatus (strain G186AR / H82 / ATCC MYA-2454 / RMSCC 2432) (Darling's disease fungus), this protein is Ubiquinone biosynthesis protein COQ4, mitochondrial.